We begin with the raw amino-acid sequence, 70 residues long: Large ribosomal subunit protein uL29 (70 aa).

The protein belongs to the universal ribosomal protein uL29 family.

The protein is Large ribosomal subunit protein uL29 of Prochlorococcus marinus (strain MIT 9313).